The sequence spans 249 residues: Ubiquinone biosynthesis O-methyltransferase (249 aa).

S-adenosyl-L-methionine-binding residues include arginine 41, glycine 72, aspartate 93, and methionine 136.

It belongs to the methyltransferase superfamily. UbiG/COQ3 family.

The catalysed reaction is a 3-demethylubiquinol + S-adenosyl-L-methionine = a ubiquinol + S-adenosyl-L-homocysteine + H(+). It catalyses the reaction a 3-(all-trans-polyprenyl)benzene-1,2-diol + S-adenosyl-L-methionine = a 2-methoxy-6-(all-trans-polyprenyl)phenol + S-adenosyl-L-homocysteine + H(+). Its pathway is cofactor biosynthesis; ubiquinone biosynthesis. Functionally, O-methyltransferase that catalyzes the 2 O-methylation steps in the ubiquinone biosynthetic pathway. The chain is Ubiquinone biosynthesis O-methyltransferase from Methylobacterium nodulans (strain LMG 21967 / CNCM I-2342 / ORS 2060).